Reading from the N-terminus, the 94-residue chain is MLKPLGDRVVIEAISKDETTASGIVLPDSAKEKPQEGRVIAVGSGRVADNGERIALEVKEGDKVIFSKYAGTEVKVDNNEYLVLRESDILAIIG.

Belongs to the GroES chaperonin family. As to quaternary structure, heptamer of 7 subunits arranged in a ring. Interacts with the chaperonin GroEL.

The protein localises to the cytoplasm. In terms of biological role, together with the chaperonin GroEL, plays an essential role in assisting protein folding. The GroEL-GroES system forms a nano-cage that allows encapsulation of the non-native substrate proteins and provides a physical environment optimized to promote and accelerate protein folding. GroES binds to the apical surface of the GroEL ring, thereby capping the opening of the GroEL channel. The sequence is that of Co-chaperonin GroES from Brevibacillus brevis (strain 47 / JCM 6285 / NBRC 100599).